We begin with the raw amino-acid sequence, 140 residues long: MSVLSEFKAFAVKGNVVDLAVGVIIGGAFGKIVESLVGDVIMPIVSKIFGGLDFSNYFIPLAGQTATTLVEAKKAGAVLAYGSFITVAINFMILAFIIFMMIKQINRLQSAPAPAPAPAEPPPPAEDIVLLREIRDSLKR.

Transmembrane regions (helical) follow at residues V21 to I41 and G82 to I102.

This sequence belongs to the MscL family. Homopentamer.

Its subcellular location is the cell inner membrane. Channel that opens in response to stretch forces in the membrane lipid bilayer. May participate in the regulation of osmotic pressure changes within the cell. The protein is Large-conductance mechanosensitive channel of Leptothrix cholodnii (strain ATCC 51168 / LMG 8142 / SP-6) (Leptothrix discophora (strain SP-6)).